We begin with the raw amino-acid sequence, 418 residues long: Lysophosphatidic acid phosphatase type 6 (418 aa).

Residues 1–25 (MRVWVPVGVLTSLAYCFHQRRVALA) constitute a mitochondrion transit peptide. Residues 51–161 (RHGARSPLKP…VFIRSTNMFR (111 aa)) form a substrate binding region. The active-site Nucleophile is the histidine 52. Residue aspartate 327 is the Proton donor of the active site.

It belongs to the histidine acid phosphatase family. Monomer.

Its subcellular location is the mitochondrion. It catalyses the reaction a phosphate monoester + H2O = an alcohol + phosphate. The enzyme catalyses 1-(9Z-octadecenoyl)-sn-glycero-3-phosphate + H2O = 1-(9Z-octadecenoyl)-sn-glycerol + phosphate. Hydrolyzes lysophosphatidic acid (LPA) containing a medium length fatty acid chain to the corresponding monoacylglycerol. Has highest activity with lysophosphatidic acid containing myristate (C14:0), monounsaturated oleate (C18:1) or palmitate (C16:0), and lower activity with C18:0 and C6:0 lysophosphatidic acid. The chain is Lysophosphatidic acid phosphatase type 6 (Acp6) from Mus musculus (Mouse).